A 679-amino-acid chain; its full sequence is FAST kinase domain-containing protein 2, mitochondrial (679 aa).

2 positions are modified to phosphoserine: Ser113 and Ser126. The RAP domain occupies 607–664 (VAVLCVPKSAYCLNSNHLRGLMAMKIRHLNVMGFHVILIHNWELKKLKMEDAVTFVRK).

Belongs to the FAST kinase family. As to quaternary structure, monomer. Found in a complex with GRSF1, DDX28, DHX30 and FASTKD5. Associates with the 16S mitochondrial rRNA (16S mt-rRNA). Forms a regulatory protein-RNA complex, consisting of RCC1L, NGRN, RPUSD3, RPUSD4, TRUB2, FASTKD2 and 16S mt-rRNA.

The protein resides in the mitochondrion matrix. It is found in the mitochondrion nucleoid. In terms of biological role, plays an important role in assembly of the mitochondrial large ribosomal subunit. As a component of a functional protein-RNA module, consisting of RCC1L, NGRN, RPUSD3, RPUSD4, TRUB2, FASTKD2 and 16S mitochondrial ribosomal RNA (16S mt-rRNA), controls 16S mt-rRNA abundance and is required for intra-mitochondrial translation. May play a role in mitochondrial apoptosis. The protein is FAST kinase domain-containing protein 2, mitochondrial (Fastkd2) of Rattus norvegicus (Rat).